A 252-amino-acid polypeptide reads, in one-letter code: Phosphate import ATP-binding protein PstB (252 aa).

The ABC transporter domain occupies 6 to 247; that stretch reads IDTRDVNFWY…PEKEATQNYI (242 aa). Position 38–45 (38–45) interacts with ATP; sequence GPSGCGKS.

The protein belongs to the ABC transporter superfamily. Phosphate importer (TC 3.A.1.7) family. The complex is composed of two ATP-binding proteins (PstB), two transmembrane proteins (PstC and PstA) and a solute-binding protein (PstS).

Its subcellular location is the cell inner membrane. It catalyses the reaction phosphate(out) + ATP + H2O = ADP + 2 phosphate(in) + H(+). Part of the ABC transporter complex PstSACB involved in phosphate import. Responsible for energy coupling to the transport system. In Bacteroides thetaiotaomicron (strain ATCC 29148 / DSM 2079 / JCM 5827 / CCUG 10774 / NCTC 10582 / VPI-5482 / E50), this protein is Phosphate import ATP-binding protein PstB.